The following is a 120-amino-acid chain: Glycine cleavage system H protein (120 aa).

The region spanning 17–99 (VATVGITAHA…MGAGWFFKLK (83 aa)) is the Lipoyl-binding domain. Lysine 58 is modified (N6-lipoyllysine).

This sequence belongs to the GcvH family. In terms of assembly, the glycine cleavage system is composed of four proteins: P, T, L and H. The cofactor is (R)-lipoate.

In terms of biological role, the glycine cleavage system catalyzes the degradation of glycine. The H protein shuttles the methylamine group of glycine from the P protein to the T protein. The polypeptide is Glycine cleavage system H protein (Rhizobium rhizogenes (strain K84 / ATCC BAA-868) (Agrobacterium radiobacter)).